The following is a 384-amino-acid chain: Dual-specificity RNA methyltransferase RlmN (384 aa).

The active-site Proton acceptor is the glutamate 105. One can recognise a Radical SAM core domain in the interval 111-350 (EDDRATLCVS…TIVRKTRGDD (240 aa)). Cysteines 118 and 355 form a disulfide. [4Fe-4S] cluster is bound by residues cysteine 125, cysteine 129, and cysteine 132. Residues 179–180 (GE), serine 211, 233–235 (SLH), and asparagine 312 contribute to the S-adenosyl-L-methionine site. The active-site S-methylcysteine intermediate is cysteine 355.

This sequence belongs to the radical SAM superfamily. RlmN family. Requires [4Fe-4S] cluster as cofactor.

Its subcellular location is the cytoplasm. It carries out the reaction adenosine(2503) in 23S rRNA + 2 reduced [2Fe-2S]-[ferredoxin] + 2 S-adenosyl-L-methionine = 2-methyladenosine(2503) in 23S rRNA + 5'-deoxyadenosine + L-methionine + 2 oxidized [2Fe-2S]-[ferredoxin] + S-adenosyl-L-homocysteine. It catalyses the reaction adenosine(37) in tRNA + 2 reduced [2Fe-2S]-[ferredoxin] + 2 S-adenosyl-L-methionine = 2-methyladenosine(37) in tRNA + 5'-deoxyadenosine + L-methionine + 2 oxidized [2Fe-2S]-[ferredoxin] + S-adenosyl-L-homocysteine. Its function is as follows. Specifically methylates position 2 of adenine 2503 in 23S rRNA and position 2 of adenine 37 in tRNAs. m2A2503 modification seems to play a crucial role in the proofreading step occurring at the peptidyl transferase center and thus would serve to optimize ribosomal fidelity. The sequence is that of Dual-specificity RNA methyltransferase RlmN from Escherichia coli O17:K52:H18 (strain UMN026 / ExPEC).